Here is a 485-residue protein sequence, read N- to C-terminus: Glutamate--tRNA ligase 2 (485 aa).

A 'HIGH' region motif is present at residues 10–20 (PSPTGPIHIGN). Residues 252–256 (KLSKR) carry the 'KMSKS' region motif. Lysine 255 is a binding site for ATP.

This sequence belongs to the class-I aminoacyl-tRNA synthetase family. Glutamate--tRNA ligase type 1 subfamily. As to quaternary structure, monomer.

It is found in the cytoplasm. The enzyme catalyses tRNA(Glu) + L-glutamate + ATP = L-glutamyl-tRNA(Glu) + AMP + diphosphate. Functionally, catalyzes the attachment of glutamate to tRNA(Glu) in a two-step reaction: glutamate is first activated by ATP to form Glu-AMP and then transferred to the acceptor end of tRNA(Glu). In Caldanaerobacter subterraneus subsp. tengcongensis (strain DSM 15242 / JCM 11007 / NBRC 100824 / MB4) (Thermoanaerobacter tengcongensis), this protein is Glutamate--tRNA ligase 2.